A 154-amino-acid chain; its full sequence is Aspartate carbamoyltransferase regulatory chain (154 aa).

Positions 109, 114, 138, and 141 each coordinate Zn(2+).

The protein belongs to the PyrI family. Contains catalytic and regulatory chains. Zn(2+) is required as a cofactor.

Involved in allosteric regulation of aspartate carbamoyltransferase. This Tolumonas auensis (strain DSM 9187 / NBRC 110442 / TA 4) protein is Aspartate carbamoyltransferase regulatory chain.